A 91-amino-acid chain; its full sequence is Sec-independent protein translocase protein TatA (91 aa).

A helical transmembrane segment spans residues Met1 to Gly21. The tract at residues Lys44–Ala91 is disordered. The segment covering Ser51–Pro74 has biased composition (low complexity).

It belongs to the TatA/E family. As to quaternary structure, the Tat system comprises two distinct complexes: a TatABC complex, containing multiple copies of TatA, TatB and TatC subunits, and a separate TatA complex, containing only TatA subunits. Substrates initially bind to the TatABC complex, which probably triggers association of the separate TatA complex to form the active translocon.

The protein localises to the cell membrane. Its function is as follows. Part of the twin-arginine translocation (Tat) system that transports large folded proteins containing a characteristic twin-arginine motif in their signal peptide across membranes. TatA could form the protein-conducting channel of the Tat system. This chain is Sec-independent protein translocase protein TatA, found in Rhodococcus jostii (strain RHA1).